The sequence spans 402 residues: Tryptophan synthase beta chain (402 aa).

Lys-92 carries the N6-(pyridoxal phosphate)lysine modification.

It belongs to the TrpB family. Tetramer of two alpha and two beta chains. Pyridoxal 5'-phosphate is required as a cofactor.

The enzyme catalyses (1S,2R)-1-C-(indol-3-yl)glycerol 3-phosphate + L-serine = D-glyceraldehyde 3-phosphate + L-tryptophan + H2O. Its pathway is amino-acid biosynthesis; L-tryptophan biosynthesis; L-tryptophan from chorismate: step 5/5. The beta subunit is responsible for the synthesis of L-tryptophan from indole and L-serine. In Staphylococcus epidermidis (strain ATCC 35984 / DSM 28319 / BCRC 17069 / CCUG 31568 / BM 3577 / RP62A), this protein is Tryptophan synthase beta chain.